A 138-amino-acid chain; its full sequence is Acidic phospholipase A2 RV-7 (138 aa).

A signal peptide spans methionine 1 to glycine 16. 7 disulfide bridges follow: cysteine 42/cysteine 131, cysteine 44/cysteine 60, cysteine 59/cysteine 111, cysteine 65/cysteine 138, cysteine 66/cysteine 104, cysteine 73/cysteine 97, and cysteine 91/cysteine 102. Residues tyrosine 43, glycine 45, and glycine 47 each contribute to the Ca(2+) site. The active site involves histidine 63. Position 64 (aspartate 64) interacts with Ca(2+). Aspartate 105 is a catalytic residue.

It belongs to the phospholipase A2 family. Group II subfamily. D49 sub-subfamily. As to quaternary structure, heterodimer of a weakly toxic basic protein having phospholipase A2 activity (RV-4) and a non-toxic acidic protein which inhibits its enzymatic activity but potentiates its lethal potency and neurotoxicity (RV-7). Requires Ca(2+) as cofactor. Expressed by the venom gland.

The protein localises to the secreted. The catalysed reaction is a 1,2-diacyl-sn-glycero-3-phosphocholine + H2O = a 1-acyl-sn-glycero-3-phosphocholine + a fatty acid + H(+). Heterodimer: RV-4/RV-7 targets the presynaptic sites of the neuromuscular junction. Functionally, monomer: snake venom phospholipase A2 (PLA2) RV-7 that has low enzymatic activity and is not toxic. It inhibits the enzymatic activity of RV-4 in vitro but potentiates its lethal potency and neurotoxicity. It may facilitate the specific binding of RV-4 to its presynaptic binding sites, probably by acting as a chaperone, minimizing distraction and destruction of RV-4 en route to the site of action by reducing non-specific binding to muscle and other organs. PLA2 catalyzes the calcium-dependent hydrolysis of the 2-acyl groups in 3-sn-phosphoglycerides. The protein is Acidic phospholipase A2 RV-7 of Daboia siamensis (Eastern Russel's viper).